The sequence spans 183 residues: tRNA-splicing endonuclease (183 aa).

Catalysis depends on residues Tyr-120, His-128, and Lys-159.

This sequence belongs to the tRNA-intron endonuclease family. Archaeal short subfamily. Homotetramer; although the tetramer contains four active sites, only two participate in the cleavage. Therefore, it should be considered as a dimer of dimers.

It catalyses the reaction pretRNA = a 3'-half-tRNA molecule with a 5'-OH end + a 5'-half-tRNA molecule with a 2',3'-cyclic phosphate end + an intron with a 2',3'-cyclic phosphate and a 5'-hydroxyl terminus.. Functionally, endonuclease that removes tRNA introns. Cleaves pre-tRNA at the 5'- and 3'-splice sites to release the intron. The products are an intron and two tRNA half-molecules bearing 2',3' cyclic phosphate and 5'-OH termini. Recognizes a pseudosymmetric substrate in which 2 bulged loops of 3 bases are separated by a stem of 4 bp. This Pyrobaculum arsenaticum (strain DSM 13514 / JCM 11321 / PZ6) protein is tRNA-splicing endonuclease.